A 367-amino-acid chain; its full sequence is Methylated-thiol--coenzyme M methyltransferase (367 aa).

Residues His236, Cys238, and Cys313 each contribute to the Zn(2+) site.

It belongs to the uroporphyrinogen decarboxylase family. In terms of assembly, homodimer. It depends on Zn(2+) as a cofactor.

It catalyses the reaction methanethiol + coenzyme M = methyl-coenzyme M + hydrogen sulfide + H(+). Its function is as follows. Methyltransferase involved in methanogenesis from methylated-thiols. Catalyzes two successive steps: mediates the transfer of a methyl group from the substrate to the cobalt cofactor of a methylated-thiol-specific corrinoid protein (MtsB), and the subsequent transfer of the methyl group from the corrinoid protein to coenzyme M. This chain is Methylated-thiol--coenzyme M methyltransferase (mtsA), found in Methanosarcina mazei (strain ATCC BAA-159 / DSM 3647 / Goe1 / Go1 / JCM 11833 / OCM 88) (Methanosarcina frisia).